Consider the following 475-residue polypeptide: Aspartyl/glutamyl-tRNA(Asn/Gln) amidotransferase subunit B (475 aa).

The protein belongs to the GatB/GatE family. GatB subfamily. As to quaternary structure, heterotrimer of A, B and C subunits.

The enzyme catalyses L-glutamyl-tRNA(Gln) + L-glutamine + ATP + H2O = L-glutaminyl-tRNA(Gln) + L-glutamate + ADP + phosphate + H(+). The catalysed reaction is L-aspartyl-tRNA(Asn) + L-glutamine + ATP + H2O = L-asparaginyl-tRNA(Asn) + L-glutamate + ADP + phosphate + 2 H(+). Allows the formation of correctly charged Asn-tRNA(Asn) or Gln-tRNA(Gln) through the transamidation of misacylated Asp-tRNA(Asn) or Glu-tRNA(Gln) in organisms which lack either or both of asparaginyl-tRNA or glutaminyl-tRNA synthetases. The reaction takes place in the presence of glutamine and ATP through an activated phospho-Asp-tRNA(Asn) or phospho-Glu-tRNA(Gln). The polypeptide is Aspartyl/glutamyl-tRNA(Asn/Gln) amidotransferase subunit B (Agathobacter rectalis (strain ATCC 33656 / DSM 3377 / JCM 17463 / KCTC 5835 / VPI 0990) (Eubacterium rectale)).